A 1084-amino-acid polypeptide reads, in one-letter code: Cellulose synthase A catalytic subunit 6 [UDP-forming] (1084 aa).

M1 bears the N-acetylmethionine mark. Topologically, residues M1–M277 are cytoplasmic. C39, C42, C58, C61, C66, C69, C81, and C84 together coordinate Zn(2+). An RING-type; degenerate zinc finger spans residues C39–K85. The helical transmembrane segment at L278–V298 threads the bilayer. Residues K299 to D300 lie on the Extracellular side of the membrane. A helical membrane pass occupies residues A301–L321. Residues D322–S868 are Cytoplasmic-facing. UDP-alpha-D-glucose-binding residues include S360, K366, E367, and D396. The active site involves D396. Residues V450–K476 adopt a coiled-coil conformation. K537 is a UDP-alpha-D-glucose binding site. 2 residues coordinate Mn(2+): K538 and D562. Positions R675 to E703 form a coiled coil. D785 is an active-site residue. The chain crosses the membrane as a helical span at residues L869–V889. The Extracellular portion of the chain corresponds to P890–N894. Residues Y895–M915 form a helical membrane-spanning segment. Over Q916–Q930 the chain is Cytoplasmic. Residues F931–V951 traverse the membrane as a helical segment. The Extracellular segment spans residues L952–T980. N958 is a glycosylation site (N-linked (GlcNAc...) asparagine). Residues S981–V1001 form a helical membrane-spanning segment. The Cytoplasmic segment spans residues S1002–W1012. A helical membrane pass occupies residues G1013–L1033. The Extracellular portion of the chain corresponds to K1034–R1042. The chain crosses the membrane as a helical span at residues M1043–V1063. Topologically, residues R1064–L1084 are cytoplasmic.

The protein belongs to the glycosyltransferase 2 family. Plant cellulose synthase subfamily. Interacts with CESA1 and CESA3. Interacts with STL1 and STL2, but not with GOT1. Binds to CSI1 and CSI3. Interacts with PAT24/TIP1. The cofactor is Zn(2+). Mn(2+) serves as cofactor. Post-translationally, S-acylated. In terms of tissue distribution, expressed in germinating seeds, seedlings, roots, stems, leaves and flowers. Not present in mature flowers.

It is found in the cell membrane. The enzyme catalyses [(1-&gt;4)-beta-D-glucosyl](n) + UDP-alpha-D-glucose = [(1-&gt;4)-beta-D-glucosyl](n+1) + UDP + H(+). It functions in the pathway glycan metabolism; plant cellulose biosynthesis. Its function is as follows. Catalytic subunit of cellulose synthase terminal complexes ('rosettes'), required for beta-1,4-glucan microfibril crystallization, a major mechanism of the cell wall formation. Involved in the primary cell wall formation. The presence of each protein CESA1 and CESA6 is critical for cell expansion. The hypocotyl elongation is based on a CESA6-dependent cell elongation in dark and a CESA6-independent cell elongation in light. The transition between these two mechanisms requires photosynthesis and PHYB, but not CRY1. The CESA6-dependent cell elongation seems to be independent of gibberellic acid, auxin and ethylene. May be involved in sensitivity to isoxaben. Associates with and moves along cortical microtubules for the process of cellulose deposition. In Arabidopsis thaliana (Mouse-ear cress), this protein is Cellulose synthase A catalytic subunit 6 [UDP-forming].